We begin with the raw amino-acid sequence, 257 residues long: MSSRKSLSVVMIAKNEAGLLPDCLRSVAWADEIIVLDSGSEDDSVAVAESLGAKVFTHTDWQGFGKQRQLAQSYASHDYVLMIDADERVTPELRQSIERVLNAPDDGAVYSCARRNLFLGRFMRHSGWYPDRVNRLYANSRYRYNDDLVHELLNIGDAKVIPLSGDMLHLTCRDFFAFQRKQLRYAEEWATQRHRAGKRCGYLSILTHTLGAFVKTWLLRAGFLDGKQGLLLAVVNAQYTFNKYAALWALGRNYSEK.

This sequence belongs to the glycosyltransferase 2 family. WaaE/KdtX subfamily.

It functions in the pathway bacterial outer membrane biogenesis; LPS core biosynthesis. This is Lipopolysaccharide core biosynthesis glycosyltransferase KdtX (kdtX) from Serratia marcescens.